The primary structure comprises 407 residues: Aurora kinase (407 aa).

Disordered regions lie at residues 1 to 43 (MTPT…STSS) and 66 to 137 (ERQG…TQSK). 2 stretches are compositionally biased toward low complexity: residues 31-43 (SASTTSTTASTSS) and 126-136 (STTTTMTSTQS). In terms of domain architecture, Protein kinase spans 147 to 399 (FDIGRPLGKG…LEGVIAHAWI (253 aa)). ATP is bound by residues Lys-157, Lys-176, and 224–227 (LEYA). The active-site Proton acceptor is the Asp-272. Residue Asp-290 coordinates ATP.

Belongs to the protein kinase superfamily. Ser/Thr protein kinase family.

The protein localises to the cytoplasm. The protein resides in the cytoskeleton. It is found in the spindle. Its subcellular location is the midbody. It localises to the microtubule organizing center. The protein localises to the centrosome. The protein resides in the nucleus. It is found in the chromosome. Its subcellular location is the centromere. It carries out the reaction L-seryl-[protein] + ATP = O-phospho-L-seryl-[protein] + ADP + H(+). The catalysed reaction is L-threonyl-[protein] + ATP = O-phospho-L-threonyl-[protein] + ADP + H(+). Cdc2 activity is required for activation. Serine/threonine protein kinase that contributes to the regulation of cell cycle progression. Involved in meiotic apparatus formation and polar body extrusion. Contributes to Plk1 activation and phosphorylation of histone H3 at 'Ser-10' during meiosis I. Required for accurate progression of early embryonic M phase. Involved in chromosome alignment and cleavage furrow formation during early embryonic cycles. May be involved in mitotic spindle formation and cytokinesis. The sequence is that of Aurora kinase from Patiria pectinifera (Starfish).